A 396-amino-acid polypeptide reads, in one-letter code: Elongation factor Tu (396 aa).

Residues 10–205 enclose the tr-type G domain; that stretch reads KSHANIGTIG…AVDEYIPTPE (196 aa). The interval 19 to 26 is G1; it reads GHVDHGKT. Residue 19-26 participates in GTP binding; the sequence is GHVDHGKT. T26 contacts Mg(2+). Positions 61 to 65 are G2; that stretch reads GITIS. Residues 82-85 are G3; that stretch reads DCPG. Residues 82 to 86 and 137 to 140 each bind GTP; these read DCPGH and NKCD. Residues 137 to 140 form a G4 region; that stretch reads NKCD. The tract at residues 175–177 is G5; sequence SAL. A Phosphothreonine modification is found at T385.

Belongs to the TRAFAC class translation factor GTPase superfamily. Classic translation factor GTPase family. EF-Tu/EF-1A subfamily. As to quaternary structure, monomer. Interacts with BrxC. Post-translationally, phosphorylated on Thr-385 in vitro by PrkC in the presence of poly-L-lysine or myelin basic protein, dephosphorylated by PrpC.

The protein localises to the cytoplasm. The catalysed reaction is GTP + H2O = GDP + phosphate + H(+). Its function is as follows. GTP hydrolase that promotes the GTP-dependent binding of aminoacyl-tRNA to the A-site of ribosomes during protein biosynthesis. The chain is Elongation factor Tu from Bacillus subtilis (strain 168).